We begin with the raw amino-acid sequence, 1126 residues long: NUT family member 1 (1126 aa).

Disordered stretches follow at residues 1–56 (MASD…PVFS), 334–367 (IPKKAASKTRAPRRRQRKPQRPPVPEAPKEIPPE), 475–515 (EDAQ…QGAA), 537–559 (QEQTLGGPAGIHKDGNNLPSPSS), 664–692 (AGMLTRGREPPSVVSQKGSSRAVRGDDRG), 755–810 (ALNS…GPGL), and 932–1014 (GEGR…EELS). Positions 30–55 (FAPPPPVPPDQPLWEPSPQPPIPPVF) are enriched in pro residues. Residues 338–353 (AASKTRAPRRRQRKPQ) are compositionally biased toward basic residues. Over residues 962 to 975 (KLTNGQGQGSTSPR) the composition is skewed to polar residues. At S973 the chain carries Phosphoserine. Over residues 987 to 1005 (TPIKEKCTSADRAKRRETE) the composition is skewed to basic and acidic residues. S1022, S1025, and S1027 each carry phosphoserine. A disordered region spans residues 1032-1126 (PLSTRQASGG…SKRKKRRRSQ (95 aa)). At Q1042 the chain carries N5-methylglutamine. Residues 1106–1126 (PRKRRRDGFVTSKRKKRRRSQ) show a composition bias toward basic residues.

The protein belongs to the NUT family. Methylated at Gln-1042 by N6AMT1. In terms of processing, phosphorylation on Ser-1022, Ser-1025 or Ser-1027 is important for cytoplasmic export.

The protein localises to the cytoplasm. Its subcellular location is the nucleus. Its function is as follows. Plays a role in the regulation of proliferation. Regulates TERT expression by modulating SP1 binding to TERT promoter binding sites. In Mus musculus (Mouse), this protein is NUT family member 1.